Here is a 517-residue protein sequence, read N- to C-terminus: Bifunctional purine biosynthesis protein PurH (517 aa).

Residues 1–145 enclose the MGS-like domain; that stretch reads MSPLALVSVS…KNHKDVSVLV (145 aa).

Belongs to the PurH family.

It catalyses the reaction (6R)-10-formyltetrahydrofolate + 5-amino-1-(5-phospho-beta-D-ribosyl)imidazole-4-carboxamide = 5-formamido-1-(5-phospho-D-ribosyl)imidazole-4-carboxamide + (6S)-5,6,7,8-tetrahydrofolate. It carries out the reaction IMP + H2O = 5-formamido-1-(5-phospho-D-ribosyl)imidazole-4-carboxamide. The protein operates within purine metabolism; IMP biosynthesis via de novo pathway; 5-formamido-1-(5-phospho-D-ribosyl)imidazole-4-carboxamide from 5-amino-1-(5-phospho-D-ribosyl)imidazole-4-carboxamide (10-formyl THF route): step 1/1. It functions in the pathway purine metabolism; IMP biosynthesis via de novo pathway; IMP from 5-formamido-1-(5-phospho-D-ribosyl)imidazole-4-carboxamide: step 1/1. The polypeptide is Bifunctional purine biosynthesis protein PurH (Prochlorococcus marinus (strain MIT 9301)).